The sequence spans 96 residues: Evasin P1100 (96 aa).

The signal sequence occupies residues 1-28; that stretch reads MAFNVITFLQFSVFVVILFNINLHSASA. Disulfide bonds link Cys-48-Cys-67, Cys-52-Cys-69, and Cys-63-Cys-80. A glycan (N-linked (GlcNAc...) asparagine) is linked at Asn-51. Asn-74 carries N-linked (GlcNAc...) asparagine glycosylation.

Its subcellular location is the secreted. Its function is as follows. Salivary chemokine-binding protein which binds to host chemokines CXCL1, CXCL2, CXCL3, CXCL5, CXCL6, CXCL10, CXCL11 and CXCL13. The protein is Evasin P1100 of Ixodes ricinus (Common tick).